The chain runs to 327 residues: Probable pectinesterase A (327 aa).

The N-terminal stretch at 1-19 is a signal peptide; that stretch reads MHTPYLLGALAALAATAVG. Asn-84 is a glycosylation site (N-linked (GlcNAc...) asparagine). Gln-145 is a binding site for substrate. Asp-168 serves as the catalytic Proton donor. Catalysis depends on Asp-189, which acts as the Nucleophile. Residues Arg-249 and Trp-251 each coordinate substrate. Asn-288 carries an N-linked (GlcNAc...) asparagine glycan.

This sequence belongs to the pectinesterase family.

It is found in the secreted. The catalysed reaction is [(1-&gt;4)-alpha-D-galacturonosyl methyl ester](n) + n H2O = [(1-&gt;4)-alpha-D-galacturonosyl](n) + n methanol + n H(+). The protein operates within glycan metabolism; pectin degradation; 2-dehydro-3-deoxy-D-gluconate from pectin: step 1/5. Involved in maceration and soft-rotting of plant tissue. This chain is Probable pectinesterase A (pmeA), found in Aspergillus niger (strain ATCC MYA-4892 / CBS 513.88 / FGSC A1513).